Consider the following 130-residue polypeptide: Histone H2A type 1 (130 aa).

The segment at 1–22 (MSGRGKQGGKARAKAKSRSSRA) is disordered. N-acetylserine is present on Ser-2. Position 2 is a phosphoserine; by RPS6KA5 (Ser-2). Arg-4 is subject to Citrulline; alternate. At Arg-4 the chain carries Symmetric dimethylarginine; by PRMT5; alternate. Position 6 is an N6-(2-hydroxyisobutyryl)lysine (Lys-6). A compositionally biased stretch (basic residues) spans 7 to 19 (QGGKARAKAKSRS). Lys-10 carries the N6-(2-hydroxyisobutyryl)lysine; alternate modification. At Lys-10 the chain carries N6-lactoyllysine; alternate. The residue at position 10 (Lys-10) is an N6-succinyllysine; alternate. Residues Lys-14 and Lys-16 each participate in a glycyl lysine isopeptide (Lys-Gly) (interchain with G-Cter in ubiquitin) cross-link. At Lys-37 the chain carries N6-(2-hydroxyisobutyryl)lysine; alternate. At Lys-37 the chain carries N6-(beta-hydroxybutyryl)lysine; alternate. Lys-37 carries the post-translational modification N6-crotonyllysine; alternate. Residues Lys-75 and Lys-76 each carry the N6-(2-hydroxyisobutyryl)lysine modification. N6-(2-hydroxyisobutyryl)lysine; alternate is present on Lys-96. Position 96 is an N6-succinyllysine; alternate (Lys-96). Residue Lys-96 is modified to N6-glutaryllysine; alternate. Lys-100 bears the N6-glutaryllysine mark. Residue Gln-105 is modified to N5-methylglutamine. Lys-119 is subject to N6-(2-hydroxyisobutyryl)lysine; alternate. N6-crotonyllysine; alternate is present on residues Lys-119 and Lys-120. An N6-glutaryllysine; alternate mark is found at Lys-119 and Lys-120. Residue Lys-120 forms a Glycyl lysine isopeptide (Lys-Gly) (interchain with G-Cter in ubiquitin); alternate linkage. The residue at position 121 (Thr-121) is a Phosphothreonine; by DCAF1. The residue at position 126 (Lys-126) is an N6-crotonyllysine; alternate. Lys-126 is subject to N6-glutaryllysine; alternate.

It belongs to the histone H2A family. In terms of assembly, the nucleosome is a histone octamer containing two molecules each of H2A, H2B, H3 and H4 assembled in one H3-H4 heterotetramer and two H2A-H2B heterodimers. The octamer wraps approximately 147 bp of DNA. Interacts with VRK1; the interaction is mediated by the nucleosome acidic patch, a cluster of negatively charged residues of H2A and H2B forming a cleft within the nucleosome core. In terms of processing, deiminated on Arg-4 in granulocytes upon calcium entry. Post-translationally, monoubiquitination of Lys-120 (H2AK119Ub) by RING1, TRIM37 and RNF2/RING2 complex gives a specific tag for epigenetic transcriptional repression and participates in X chromosome inactivation of female mammals. It is involved in the initiation of both imprinted and random X inactivation. Ubiquitinated H2A is enriched in inactive X chromosome chromatin. Ubiquitination of H2A functions downstream of methylation of 'Lys-27' of histone H3 (H3K27me). H2AK119Ub by RNF2/RING2 can also be induced by ultraviolet and may be involved in DNA repair. Following DNA double-strand breaks (DSBs), it is ubiquitinated through 'Lys-63' linkage of ubiquitin moieties by the E2 ligase UBE2N and the E3 ligases RNF8 and RNF168, leading to the recruitment of repair proteins to sites of DNA damage. Ubiquitination at Lys-14 and Lys-16 (H2AK13Ub and H2AK15Ub, respectively) in response to DNA damage is initiated by RNF168 that mediates monoubiquitination at these 2 sites, and 'Lys-63'-linked ubiquitin are then conjugated to monoubiquitin; RNF8 is able to extend 'Lys-63'-linked ubiquitin chains in vitro. H2AK119Ub and ionizing radiation-induced 'Lys-63'-linked ubiquitination (H2AK13Ub and H2AK15Ub) are distinct events. Phosphorylation on Ser-2 (H2AS1ph) is enhanced during mitosis. Phosphorylation on Ser-2 by RPS6KA5/MSK1 directly represses transcription. Acetylation of H3 inhibits Ser-2 phosphorylation by RPS6KA5/MSK1. Phosphorylation at Thr-121 (H2AT120ph) by DCAF1 is present in the regulatory region of many tumor suppresor genes and down-regulates their transcription. In terms of processing, symmetric dimethylation on Arg-4 by the PRDM1/PRMT5 complex may play a crucial role in the germ-cell lineage. Post-translationally, glutamine methylation at Gln-105 (H2AQ104me) by FBL is specifically dedicated to polymerase I. It is present at 35S ribosomal DNA locus and impairs binding of the FACT complex. Crotonylation (Kcr) is specifically present in male germ cells and marks testis-specific genes in post-meiotic cells, including X-linked genes that escape sex chromosome inactivation in haploid cells. Crotonylation marks active promoters and enhancers and confers resistance to transcriptional repressors. It is also associated with post-meiotically activated genes on autosomes. In terms of processing, lactylated in macrophages by EP300/P300 by using lactoyl-CoA directly derived from endogenous or exogenous lactate, leading to stimulates gene transcription.

Its subcellular location is the nucleus. It is found in the chromosome. Functionally, core component of nucleosome. Nucleosomes wrap and compact DNA into chromatin, limiting DNA accessibility to the cellular machineries which require DNA as a template. Histones thereby play a central role in transcription regulation, DNA repair, DNA replication and chromosomal stability. DNA accessibility is regulated via a complex set of post-translational modifications of histones, also called histone code, and nucleosome remodeling. This is Histone H2A type 1 from Rattus norvegicus (Rat).